The sequence spans 317 residues: Transcriptional activator protein med (317 aa).

A signal peptide spans Met-1–Gly-17. The N-palmitoyl cysteine moiety is linked to residue Cys-18. Cys-18 carries the S-diacylglycerol cysteine lipid modification.

Belongs to the BMP lipoprotein family.

The protein resides in the cell membrane. Positive activator of the comK gene. The sequence is that of Transcriptional activator protein med (med) from Bacillus subtilis (strain 168).